A 496-amino-acid chain; its full sequence is E3 ubiquitin-protein ligase CBL-C (496 aa).

The tract at residues 7–144 (PRGWQRGEPR…SALFPAGKYC (138 aa)) is 4H. The region spanning 7 to 320 (PRGWQRGEPR…GKKHNPDLTE (314 aa)) is the Cbl-PTB domain. The EF-hand-like stretch occupies residues 145–217 (GHLYQLTKGS…FEFDVFTRLF (73 aa)). Ca(2+) is bound by residues Asp198, Thr200, Asn202, and Glu209. Positions 218-320 (QPWPTLLRNW…GKKHNPDLTE (103 aa)) are SH2-like. Arg263 contributes to the 4-O-phospho-L-tyrosine binding site. A linker region spans residues 321-349 (LCRVEPYQRIQVSEEQLLLYQAMNSTFQL). Position 340 is a phosphotyrosine; by SRC (Tyr340). The RING-type zinc-finger motif lies at 350-389 (CKICAERDKDVRIEPCGHLLCSCCLAAWQDSDSQTCPFCR). The interaction with RET stretch occupies residues 350–494 (CKICAERDKD…RPRAREEATE (145 aa)). Positions 432 to 453 (PVIPSAPSLLPEDQFPQGPQDK) are disordered.

As to quaternary structure, interacts with Ubiquitin-conjugating enzyme E2 UBE2D2 and UBE2D3. Isoform 1 interacts with EGFR (tyrosine phosphorylated). Interacts with the SH3 domain proteins LYN and CRK. Interacts (via RING-type zinc finger) with TGFB1I1 (via LIM zinc-binding domain 2); the interaction is direct and enhances the E3 activity. Interacts directly with RET (inactive) and CD2AP; dissociates from RET upon RET activation by GDNF which also increases the interaction with CD2AP suggesting dissociation as CBLC:CD2AP complex. Interacts with SRC; the interaction is enhanced when SRC is phosphorylated at 'Tyr-419'. In terms of processing, phosphorylated on tyrosines by EGFR. Post-translationally, phosphorylated on multiple tyrosine residues by SRC. Isoform 1, but not isoform 2, is phosphorylated on tyrosines by EGFR. Autoubiquitinated, when phosphorylated at Tyr-340. In terms of tissue distribution, widely expressed in tissues, where the expression is restricted to epithelial cells (at protein level).

It catalyses the reaction S-ubiquitinyl-[E2 ubiquitin-conjugating enzyme]-L-cysteine + [acceptor protein]-L-lysine = [E2 ubiquitin-conjugating enzyme]-L-cysteine + N(6)-ubiquitinyl-[acceptor protein]-L-lysine.. With respect to regulation, phosphorylation at Tyr-340 is necessary and sufficient for the activation of E3 activity. Acts as an E3 ubiquitin-protein ligase, which accepts ubiquitin from specific E2 ubiquitin-conjugating enzymes, and then transfers it to substrates promoting their degradation by the proteasome. Functionally coupled with the E2 ubiquitin-protein ligases UB2D1, UB2D2 and UB2D3. Regulator of EGFR mediated signal transduction; upon EGF activation, ubiquitinates EGFR. Isoform 1, but not isoform 2, inhibits EGF stimulated MAPK1 activation. Promotes ubiquitination of SRC phosphorylated at 'Tyr-424', has the highest ubiquitin ligase activity among CBL family proteins. In collaboration with CD2AP may act as regulatory checkpoint for Ret signaling by modulating the rate of RET degradation after ligand activation; CD2AP converts it from an inhibitor to a promoter of RET degradation; the function limits the potency of GDNF on neuronal survival. This is E3 ubiquitin-protein ligase CBL-C (Cblc) from Mus musculus (Mouse).